We begin with the raw amino-acid sequence, 448 residues long: GTPase Der (448 aa).

EngA-type G domains are found at residues 2–171 and 181–364; these read FTVV…PDTQ and PKIA…EEYS. GTP-binding positions include 8 to 15, 58 to 62, 123 to 126, 187 to 194, 234 to 238, and 305 to 308; these read GRPNVGKS, DTGGF, NKID, DTAGI, and NKWD. The region spanning 365–448 is the KH-like domain; sequence KRVSTSELNR…PINIKIKQRK (84 aa).

Belongs to the TRAFAC class TrmE-Era-EngA-EngB-Septin-like GTPase superfamily. EngA (Der) GTPase family. As to quaternary structure, associates with the 50S ribosomal subunit.

In terms of biological role, GTPase that plays an essential role in the late steps of ribosome biogenesis. The protein is GTPase Der of Thermodesulfovibrio yellowstonii (strain ATCC 51303 / DSM 11347 / YP87).